A 189-amino-acid polypeptide reads, in one-letter code: Potassium-transporting ATPase KdpC subunit (189 aa).

A helical membrane pass occupies residues 10–30 (LTLVFCVFFSVCYILVLWIFA).

It belongs to the KdpC family. The system is composed of three essential subunits: KdpA, KdpB and KdpC.

It is found in the cell inner membrane. Part of the high-affinity ATP-driven potassium transport (or Kdp) system, which catalyzes the hydrolysis of ATP coupled with the electrogenic transport of potassium into the cytoplasm. This subunit acts as a catalytic chaperone that increases the ATP-binding affinity of the ATP-hydrolyzing subunit KdpB by the formation of a transient KdpB/KdpC/ATP ternary complex. This chain is Potassium-transporting ATPase KdpC subunit, found in Phocaeicola vulgatus (strain ATCC 8482 / DSM 1447 / JCM 5826 / CCUG 4940 / NBRC 14291 / NCTC 11154) (Bacteroides vulgatus).